The primary structure comprises 511 residues: GMP synthase [glutamine-hydrolyzing] (511 aa).

Residues 6–196 form the Glutamine amidotransferase type-1 domain; the sequence is LVLVLDFGSQ…VFDVCGCTGD (191 aa). Residue Cys-83 is the Nucleophile of the active site. Catalysis depends on residues His-170 and Glu-172. The region spanning 197-386 is the GMPS ATP-PPase domain; sequence WSIENFIDME…LGVPDRIVWR (190 aa). Position 224–230 (224–230) interacts with ATP; that stretch reads SGGVDSS.

In terms of assembly, homodimer.

The catalysed reaction is XMP + L-glutamine + ATP + H2O = GMP + L-glutamate + AMP + diphosphate + 2 H(+). The protein operates within purine metabolism; GMP biosynthesis; GMP from XMP (L-Gln route): step 1/1. Its function is as follows. Catalyzes the synthesis of GMP from XMP. This Oceanobacillus iheyensis (strain DSM 14371 / CIP 107618 / JCM 11309 / KCTC 3954 / HTE831) protein is GMP synthase [glutamine-hydrolyzing].